A 434-amino-acid polypeptide reads, in one-letter code: Trigger factor (434 aa).

The PPIase FKBP-type domain occupies 161 to 246 (EDRVTVDFSG…LKKVEERELP (86 aa)).

It belongs to the FKBP-type PPIase family. Tig subfamily.

It localises to the cytoplasm. The enzyme catalyses [protein]-peptidylproline (omega=180) = [protein]-peptidylproline (omega=0). Functionally, involved in protein export. Acts as a chaperone by maintaining the newly synthesized protein in an open conformation. Functions as a peptidyl-prolyl cis-trans isomerase. This is Trigger factor from Serratia proteamaculans (strain 568).